A 20-amino-acid chain; its full sequence is Probable cinnamyl alcohol dehydrogenase 1 (20 aa).

It belongs to the zinc-containing alcohol dehydrogenase family. Zn(2+) serves as cofactor.

The catalysed reaction is (E)-cinnamyl alcohol + NADP(+) = (E)-cinnamaldehyde + NADPH + H(+). The enzyme catalyses (E)-coniferol + NADP(+) = (E)-coniferaldehyde + NADPH + H(+). It catalyses the reaction (E)-sinapyl alcohol + NADP(+) = (E)-sinapaldehyde + NADPH + H(+). It carries out the reaction (E)-4-coumaroyl alcohol + NADP(+) = (E)-4-coumaraldehyde + NADPH + H(+). The catalysed reaction is (E)-caffeyl alcohol + NADP(+) = (E)-caffeyl aldehyde + NADPH + H(+). The protein operates within aromatic compound metabolism; phenylpropanoid biosynthesis. Functionally, involved in lignin biosynthesis. Catalyzes the final step specific for the production of lignin monomers, like coniferyl alcohol, sinapyl alcohol and 4-coumaryl alcohol. This Pseudotsuga menziesii (Douglas-fir) protein is Probable cinnamyl alcohol dehydrogenase 1.